Here is a 329-residue protein sequence, read N- to C-terminus: G-protein coupled bile acid receptor 1 (329 aa).

The Extracellular segment spans residues 1-18; it reads MMSHNTTELSAIPRGVQE. Residue Asn5 is glycosylated (N-linked (GlcNAc...) asparagine). The helical transmembrane segment at 19-39 threads the bilayer; sequence LSLVLASLIVIANLLLALGIV. The Cytoplasmic portion of the chain corresponds to 40 to 49; the sequence is LDRHLRSPPA. Residues 50–70 form a helical membrane-spanning segment; the sequence is GCFFLSLLLAGLLTGLALPTL. The Extracellular segment spans residues 71–84; sequence PGLWNRSHQGYWSC. Asn75 is a glycosylation site (N-linked (GlcNAc...) asparagine). Cys84 and Cys154 form a disulfide bridge. A helical membrane pass occupies residues 85–105; that stretch reads LLLHLAPNFCFLSLLANLLLV. Residues 106–124 lie on the Cytoplasmic side of the membrane; the sequence is HGERYMAVLQPLRPHGSVR. Residues 125-145 form a helical membrane-spanning segment; that stretch reads LALFLTWISSLLFASLPALGW. Over 146–157 the chain is Extracellular; sequence NHWSPGANCSSQ. Asn153 carries N-linked (GlcNAc...) asparagine glycosylation. The chain crosses the membrane as a helical span at residues 158–178; sequence AIFPAPYLYLEVYGLLLPAVG. At 179–229 the chain is on the cytoplasmic side; the sequence is ATALLSVRVLATAHHQLREIRRLERAVCRDAPSTLARALTWRQARAQAGAT. Residues 230–250 form a helical membrane-spanning segment; that stretch reads LLFLLCWGPYVATLLLSVLAY. Topologically, residues 251 to 260 are extracellular; that stretch reads ERRPPLGPVT. Residues 261–281 traverse the membrane as a helical segment; it reads LLSLISLGSASAAVVPVAMGL. Topologically, residues 282-329 are cytoplasmic; that stretch reads GDQRYTAPWRTAAQRWLQVLRGRPKRANPGPSTAYHSSSQCSTDLDLN. Residues 306–329 are disordered; it reads KRANPGPSTAYHSSSQCSTDLDLN. Residues 311–329 show a composition bias toward polar residues; the sequence is GPSTAYHSSSQCSTDLDLN.

This sequence belongs to the G-protein coupled receptor 1 family.

Its subcellular location is the cell membrane. Its function is as follows. Receptor for bile acid. Bile acid-binding induces its internalization, activation of extracellular signal-regulated kinase and intracellular cAMP production. May be involved in the suppression of macrophage functions by bile acids. Involved in bile acid promoted GLP1R secretion. The sequence is that of G-protein coupled bile acid receptor 1 (Gpbar1) from Rattus norvegicus (Rat).